Consider the following 574-residue polypeptide: Intraflagellar transport protein 56 homolog (574 aa).

3 TPR repeats span residues 20 to 52 (AQKM…GNLD), 57 to 90 (DSLQ…DDAP), and 151 to 184 (LEDR…SPNL).

Belongs to the IFT56 family. In terms of assembly, component of the IFT complex B composed of at least che-2, che-13, dyf-1, dyf-3, dyf-6, dyf-11, dyf-13, ift-20, ift-74, ift-81, ifta-2, osm-1, osm-5 and osm-6.

Its subcellular location is the cell projection. It is found in the cilium. Its function is as follows. Component of the intraflagellar transport (IFT) complex B required for transport of proteins in the motile cilium. May be required for ciliary entrance and transport of specific ciliary cargo proteins such as che-3 which are related to motility. The protein is Intraflagellar transport protein 56 homolog of Caenorhabditis elegans.